A 465-amino-acid chain; its full sequence is 6-phospho-beta-glucosidase (465 aa).

Catalysis depends on Glu-173, which acts as the Proton donor. Glu-362 acts as the Nucleophile in catalysis.

The protein belongs to the glycosyl hydrolase 1 family.

The enzyme catalyses 6-phospho-beta-D-glucosyl-(1-&gt;4)-D-glucose + H2O = D-glucose 6-phosphate + D-glucose. The protein operates within carbohydrate metabolism; beta-glucoside metabolism. This is 6-phospho-beta-glucosidase (arbB) from Dickeya chrysanthemi (Pectobacterium chrysanthemi).